The following is a 361-amino-acid chain: Mitochondrial fission regulator 2 (361 aa).

At S137 the chain carries Phosphoserine. 2 disordered regions span residues 191 to 286 (FIDL…VPNM) and 298 to 322 (LRPV…EWDP). A compositionally biased stretch (pro residues) spans 219 to 231 (VLPPPPPPPPPPQ). Residues 232–244 (FSLQPPSSLPMQP) are compositionally biased toward low complexity. Residues 250-282 (HDIDSLATEMERQLSGVKKTDDSHHSKSQRLRD) are compositionally biased toward basic and acidic residues. A phosphoserine mark is found at S304 and S340.

The protein belongs to the MTFR1 family. In terms of tissue distribution, expressed predominantly in testis (at protein level). Expressed to a lower extent in spleen.

The protein localises to the mitochondrion. Functionally, may play a role in mitochondrial aerobic respiration essentially in the testis. Can also promote mitochondrial fission. This chain is Mitochondrial fission regulator 2 (Mtfr2), found in Mus musculus (Mouse).